Reading from the N-terminus, the 235-residue chain is 2,3-bisphosphoglycerate-dependent phosphoglycerate mutase 1 (235 aa).

Residues 8 to 15 (RHGESVAN), 21 to 22 (TG), Arg-60, 87 to 90 (ERHY), Lys-98, and 114 to 115 (RR) contribute to the substrate site. The Tele-phosphohistidine intermediate role is filled by His-9. Catalysis depends on Glu-87, which acts as the Proton donor/acceptor.

Belongs to the phosphoglycerate mutase family. BPG-dependent PGAM subfamily.

The enzyme catalyses (2R)-2-phosphoglycerate = (2R)-3-phosphoglycerate. It participates in carbohydrate degradation; glycolysis; pyruvate from D-glyceraldehyde 3-phosphate: step 3/5. In terms of biological role, catalyzes the interconversion of 2-phosphoglycerate and 3-phosphoglycerate. This chain is 2,3-bisphosphoglycerate-dependent phosphoglycerate mutase 1, found in Latilactobacillus sakei subsp. sakei (strain 23K) (Lactobacillus sakei subsp. sakei).